The chain runs to 820 residues: Trimethylamine-N-oxide reductase (820 aa).

Residues 1 to 33 (MAITRRSFLKGVATTSAASVIGPSLLASASANA) constitute a signal peptide (tat-type signal). Ser179 is a Mo-bis(molybdopterin guanine dinucleotide) binding site.

Belongs to the prokaryotic molybdopterin-containing oxidoreductase family. It depends on Mo-bis(molybdopterin guanine dinucleotide) as a cofactor. Predicted to be exported by the Tat system. The position of the signal peptide cleavage has not been experimentally proven.

The protein localises to the periplasm. The catalysed reaction is trimethylamine + 2 Fe(III)-[cytochrome c] + H2O = trimethylamine N-oxide + 2 Fe(II)-[cytochrome c] + 3 H(+). Reduces trimethylamine-N-oxide (TMAO) into trimethylamine; an anaerobic reaction coupled to energy-yielding reactions. The sequence is that of Trimethylamine-N-oxide reductase (torA) from Vibrio vulnificus (strain CMCP6).